A 1378-amino-acid polypeptide reads, in one-letter code: DNA-directed RNA polymerase subunit beta (1378 aa).

The protein belongs to the RNA polymerase beta chain family. In terms of assembly, the RNAP catalytic core consists of 2 alpha, 1 beta, 1 beta' and 1 omega subunit. When a sigma factor is associated with the core the holoenzyme is formed, which can initiate transcription.

It catalyses the reaction RNA(n) + a ribonucleoside 5'-triphosphate = RNA(n+1) + diphosphate. Functionally, DNA-dependent RNA polymerase catalyzes the transcription of DNA into RNA using the four ribonucleoside triphosphates as substrates. The chain is DNA-directed RNA polymerase subunit beta from Sorangium cellulosum (strain So ce56) (Polyangium cellulosum (strain So ce56)).